The primary structure comprises 273 residues: 1,4-dihydroxy-2-naphthoyl-CoA synthase (273 aa).

Substrate contacts are provided by residues Arg34, 73–77 (SGGDQ), Tyr85, 117–121 (YAVGG), Thr143, Ser149, Tyr246, and Lys261. 142-144 (QTG) is a hydrogencarbonate binding site. Positions 254 to 265 (GRDAFKEKRDPD) are enriched in basic and acidic residues. The segment at 254-273 (GRDAFKEKRDPDFDQFPKFP) is disordered.

It belongs to the enoyl-CoA hydratase/isomerase family. MenB subfamily. The cofactor is hydrogencarbonate.

The catalysed reaction is 2-succinylbenzoyl-CoA + H(+) = 1,4-dihydroxy-2-naphthoyl-CoA + H2O. It participates in quinol/quinone metabolism; 1,4-dihydroxy-2-naphthoate biosynthesis; 1,4-dihydroxy-2-naphthoate from chorismate: step 6/7. Its pathway is quinol/quinone metabolism; menaquinone biosynthesis. In terms of biological role, converts o-succinylbenzoyl-CoA (OSB-CoA) to 1,4-dihydroxy-2-naphthoyl-CoA (DHNA-CoA). This is 1,4-dihydroxy-2-naphthoyl-CoA synthase from Staphylococcus aureus (strain MSSA476).